We begin with the raw amino-acid sequence, 174 residues long: ATP-dependent protease subunit HslV (174 aa).

T2 is an active-site residue. G157, C160, and T163 together coordinate Na(+).

The protein belongs to the peptidase T1B family. HslV subfamily. In terms of assembly, a double ring-shaped homohexamer of HslV is capped on each side by a ring-shaped HslU homohexamer. The assembly of the HslU/HslV complex is dependent on binding of ATP.

Its subcellular location is the cytoplasm. It catalyses the reaction ATP-dependent cleavage of peptide bonds with broad specificity.. Its activity is regulated as follows. Allosterically activated by HslU binding. Functionally, protease subunit of a proteasome-like degradation complex believed to be a general protein degrading machinery. The polypeptide is ATP-dependent protease subunit HslV (Cellvibrio japonicus (strain Ueda107) (Pseudomonas fluorescens subsp. cellulosa)).